The primary structure comprises 109 residues: Large ribosomal subunit protein P1 (109 aa).

The disordered stretch occupies residues Ala71–Gly109. A compositionally biased stretch (basic and acidic residues) spans Ala80–Pro95. 3 tandem repeats follow at residues Lys81–Pro85, Lys86–Pro90, and Lys91–Pro95. The 3 X 5 AA tandem repeats of K-K-E-E-P stretch occupies residues Lys81–Pro95. The span at Lys96–Gly109 shows a compositional bias: acidic residues.

Belongs to the eukaryotic ribosomal protein P1/P2 family. Not phosphorylated.

The sequence is that of Large ribosomal subunit protein P1 (RPLP1) from Tetrahymena thermophila.